The chain runs to 340 residues: MKVTLKELSQLLGATIKGDATLEITSVATLEDATQGQLSFLANSKYRAQLEATQASAVLLSEKEASCYHGNALIVSDPYVGFARVAQLLDTTPKETPGIHPSAQIDTSAILGDGAAIGANAVIGANVILGENVQIGPGCVVGESSIIGSNTRLWANVSVYHNVHIGHDCIVHSGTVIGSDGFGYANERGNWVKIPQTGGVRIGNHVEIGACTSIDRGALSHTEIHDGVIIDNQVQIAHNVVIGQNTAMAGGSIIAGSSTIGKYCIIGGGSAVAGHLSVADGVHISGGTNVTSVIREKGVYSSATIAMENKLWRRNTVRFRQLDELFSRVKTLEKSAKGSE.

His238 functions as the Proton acceptor in the catalytic mechanism.

Belongs to the transferase hexapeptide repeat family. LpxD subfamily. Homotrimer.

It catalyses the reaction a UDP-3-O-[(3R)-3-hydroxyacyl]-alpha-D-glucosamine + a (3R)-hydroxyacyl-[ACP] = a UDP-2-N,3-O-bis[(3R)-3-hydroxyacyl]-alpha-D-glucosamine + holo-[ACP] + H(+). It participates in bacterial outer membrane biogenesis; LPS lipid A biosynthesis. Catalyzes the N-acylation of UDP-3-O-acylglucosamine using 3-hydroxyacyl-ACP as the acyl donor. Is involved in the biosynthesis of lipid A, a phosphorylated glycolipid that anchors the lipopolysaccharide to the outer membrane of the cell. In Shewanella frigidimarina (strain NCIMB 400), this protein is UDP-3-O-acylglucosamine N-acyltransferase.